Consider the following 350-residue polypeptide: Galactokinase (350 aa).

14 to 17 (EHTD) provides a ligand contact to substrate. Residues Ser-46 and 96 to 102 (GAGLSSS) each bind ATP. The Mg(2+) site is built by Ser-102 and Glu-134. Asp-146 serves as the catalytic Proton acceptor. A substrate-binding site is contributed by Tyr-196.

Belongs to the GHMP kinase family. GalK subfamily.

The protein localises to the cytoplasm. It carries out the reaction alpha-D-galactose + ATP = alpha-D-galactose 1-phosphate + ADP + H(+). It functions in the pathway carbohydrate metabolism; galactose metabolism. Catalyzes the transfer of the gamma-phosphate of ATP to D-galactose to form alpha-D-galactose-1-phosphate (Gal-1-P). In Thermotoga neapolitana (strain ATCC 49049 / DSM 4359 / NBRC 107923 / NS-E), this protein is Galactokinase.